The chain runs to 443 residues: C4-dicarboxylate transport protein (443 aa).

9 consecutive transmembrane segments (helical) span residues 17-37 (PFYS…ILLG), 57-77 (LVKM…IAGM), 92-112 (LYFL…ANVV), 139-159 (EQSI…GAFA), 161-181 (GDIL…AMVG), 201-221 (LVAI…AFTI), 234-254 (MLIG…LGAV), 320-340 (IYMT…LSWG), and 368-388 (AATL…ILGI).

It belongs to the dicarboxylate/amino acid:cation symporter (DAACS) (TC 2.A.23) family.

It localises to the cell inner membrane. Responsible for the transport of dicarboxylates such as succinate, fumarate, and malate from the periplasm across the membrane. This is C4-dicarboxylate transport protein from Rhizobium leguminosarum bv. trifolii (strain WSM2304).